A 100-amino-acid polypeptide reads, in one-letter code: Large ribosomal subunit protein uL23 (100 aa).

It belongs to the universal ribosomal protein uL23 family. Part of the 50S ribosomal subunit. Contacts protein L29, and trigger factor when it is bound to the ribosome.

Its function is as follows. One of the early assembly proteins it binds 23S rRNA. One of the proteins that surrounds the polypeptide exit tunnel on the outside of the ribosome. Forms the main docking site for trigger factor binding to the ribosome. The protein is Large ribosomal subunit protein uL23 of Mycolicibacterium gilvum (strain PYR-GCK) (Mycobacterium gilvum (strain PYR-GCK)).